Reading from the N-terminus, the 495-residue chain is Zinc finger and SCAN domain-containing protein 5B (495 aa).

A disordered region spans residues 1-40 (MAANWTLSWGQGGPCNSPGSDTPRSVASPETQLGNHDRNP). Residues 17-34 (SPGSDTPRSVASPETQLG) show a composition bias toward polar residues. One can recognise an SCAN box domain in the interval 44 to 126 (HMNFRMFSCP…DLLRNNRRPK (83 aa)). 2 disordered regions span residues 150–183 (APASVRDDPRDVSSQWASSVNQMHPGTGQARREQ) and 227–347 (ENRE…PDGQ). The segment covering 161 to 173 (VSSQWASSVNQMH) has biased composition (polar residues). A compositionally biased stretch (basic and acidic residues) spans 250 to 262 (RAKEGKEPQKRAS). The span at 292–310 (NLSSPKRSKPDASSISQEE) shows a compositional bias: polar residues. 5 C2H2-type zinc fingers span residues 355–377 (FACDVCNKSFKYFSQLSIHRRSH), 383–405 (FQCDLCRKRFLQPSDLRVHQRVH), 411–433 (YMCDVCQKRFAHESTLQGHKRIH), 439–461 (FKCKYCSKVFSHKGNLNVHQRTH), and 467–489 (YKCPTCQKAFRQLGTFKRHLKTH).

The protein localises to the nucleus. May be involved in transcriptional regulation. This is Zinc finger and SCAN domain-containing protein 5B (ZSCAN5B) from Homo sapiens (Human).